The chain runs to 376 residues: T-box transcription factor 18 (376 aa).

Residues 38 to 63 (STSRPSSSSPPSLPAVSSELLSSSFP) show a composition bias toward low complexity. Residues 38-76 (STSRPSSSSPPSLPAVSSELLSSSFPTNAPESSSRDLAP) form a disordered region. Positions 171–364 (LANQEQWAKF…GNKYCRTDRK (194 aa)) form a DNA-binding region, T-box.

It is found in the nucleus. In terms of biological role, transcriptional regulator involved in developmental processes. Directly binds to the promoter region of the sex-determining factor xol-1 to activate its transcription. Its activation of xol-1 transcription controls sex determination and X chromosome dosage compensation to promote male development. Has a role in the fox-1-sex-1-mediated determination of sexual fate. The chain is T-box transcription factor 18 from Caenorhabditis elegans.